Consider the following 24-residue polypeptide: Brevinin-1GRa (24 aa).

Expressed by the skin glands.

Its subcellular location is the secreted. Antimicrobial peptide active against the Gram-positive bacterium S.aureus (MIC=12.5 uM) and against the Gram-negative bacteria E.coli (MIC=25 uM). The polypeptide is Brevinin-1GRa (Odorrana grahami (Yunnanfu frog)).